Here is a 629-residue protein sequence, read N- to C-terminus: uncharacterized protein (629 aa).

Residue Met1 is modified to N-acetylmethionine. The interval 308–395 is disordered; that stretch reads VDPEPEPDPP…PGRRSRARNA (88 aa). A compositionally biased stretch (polar residues) spans 322-334; the sequence is SANEPASQPNSRS. A VWFA domain is found at 451–587; that stretch reads LVIFVVDASG…VAEGAAAVVV (137 aa).

The protein belongs to the Mg-chelatase subunits D/I family.

This is an uncharacterized protein from Mycobacterium tuberculosis (strain ATCC 25618 / H37Rv).